The following is a 301-amino-acid chain: Probable alpha-L-glutamate ligase (301 aa).

One can recognise an ATP-grasp domain in the interval 104–287 (LQLLSRKGVG…VAGRIVSFIE (184 aa)). Residues Lys141, 178–179 (EF), Asp187, and 211–213 (RSN) contribute to the ATP site. Mg(2+) is bound by residues Asp248, Glu260, and Asn262. Residues Asp248, Glu260, and Asn262 each contribute to the Mn(2+) site.

The protein belongs to the RimK family. It depends on Mg(2+) as a cofactor. Mn(2+) serves as cofactor.

The chain is Probable alpha-L-glutamate ligase from Thioalkalivibrio sulfidiphilus (strain HL-EbGR7).